A 406-amino-acid chain; its full sequence is Phosphopentomutase (406 aa).

Mn(2+) is bound by residues Asp10, Asp305, His310, Asp346, His347, and His358.

It belongs to the phosphopentomutase family. It depends on Mn(2+) as a cofactor.

The protein resides in the cytoplasm. The catalysed reaction is 2-deoxy-alpha-D-ribose 1-phosphate = 2-deoxy-D-ribose 5-phosphate. The enzyme catalyses alpha-D-ribose 1-phosphate = D-ribose 5-phosphate. It participates in carbohydrate degradation; 2-deoxy-D-ribose 1-phosphate degradation; D-glyceraldehyde 3-phosphate and acetaldehyde from 2-deoxy-alpha-D-ribose 1-phosphate: step 1/2. Its function is as follows. Isomerase that catalyzes the conversion of deoxy-ribose 1-phosphate (dRib-1-P) and ribose 1-phosphate (Rib-1-P) to deoxy-ribose 5-phosphate (dRib-5-P) and ribose 5-phosphate (Rib-5-P), respectively. The sequence is that of Phosphopentomutase from Allorhizobium ampelinum (strain ATCC BAA-846 / DSM 112012 / S4) (Agrobacterium vitis (strain S4)).